A 493-amino-acid polypeptide reads, in one-letter code: 1-aminocyclopropane-1-carboxylate synthase 1 (493 aa).

Lys-279 is modified (N6-(pyridoxal phosphate)lysine).

Belongs to the class-I pyridoxal-phosphate-dependent aminotransferase family. In terms of assembly, homodimer. It depends on pyridoxal 5'-phosphate as a cofactor.

It carries out the reaction S-adenosyl-L-methionine = 1-aminocyclopropane-1-carboxylate + S-methyl-5'-thioadenosine + H(+). It functions in the pathway alkene biosynthesis; ethylene biosynthesis via S-adenosyl-L-methionine; ethylene from S-adenosyl-L-methionine: step 1/2. Its function is as follows. Catalyzes the formation of 1-aminocyclopropane-1-carboxylate, a direct precursor of ethylene in higher plants. In Cucurbita pepo (Vegetable marrow), this protein is 1-aminocyclopropane-1-carboxylate synthase 1 (ACC1A).